We begin with the raw amino-acid sequence, 156 residues long: Small ribosomal subunit protein uS7cz/uS7cy (156 aa).

The protein belongs to the universal ribosomal protein uS7 family. In terms of assembly, part of the 30S ribosomal subunit.

It is found in the plastid. Its subcellular location is the chloroplast. Functionally, one of the primary rRNA binding proteins, it binds directly to 16S rRNA where it nucleates assembly of the head domain of the 30S subunit. This Triticum aestivum (Wheat) protein is Small ribosomal subunit protein uS7cz/uS7cy (rps7-A).